A 132-amino-acid chain; its full sequence is Small ribosomal subunit protein uS8 (132 aa).

This sequence belongs to the universal ribosomal protein uS8 family. As to quaternary structure, part of the 30S ribosomal subunit. Contacts proteins S5 and S12.

In terms of biological role, one of the primary rRNA binding proteins, it binds directly to 16S rRNA central domain where it helps coordinate assembly of the platform of the 30S subunit. The sequence is that of Small ribosomal subunit protein uS8 from Micrococcus luteus (strain ATCC 4698 / DSM 20030 / JCM 1464 / CCM 169 / CCUG 5858 / IAM 1056 / NBRC 3333 / NCIMB 9278 / NCTC 2665 / VKM Ac-2230) (Micrococcus lysodeikticus).